We begin with the raw amino-acid sequence, 476 residues long: Glycogen synthase (476 aa).

Residue Lys-15 coordinates ADP-alpha-D-glucose.

Belongs to the glycosyltransferase 1 family. Bacterial/plant glycogen synthase subfamily.

The catalysed reaction is [(1-&gt;4)-alpha-D-glucosyl](n) + ADP-alpha-D-glucose = [(1-&gt;4)-alpha-D-glucosyl](n+1) + ADP + H(+). Its pathway is glycan biosynthesis; glycogen biosynthesis. Its function is as follows. Synthesizes alpha-1,4-glucan chains using ADP-glucose. The polypeptide is Glycogen synthase (Chlamydia pneumoniae (Chlamydophila pneumoniae)).